We begin with the raw amino-acid sequence, 187 residues long: Lysozyme 3 (187 aa).

An N-terminal signal peptide occupies residues 1–18; sequence MNGLFLFCVATTAALAYG. In terms of domain architecture, I-type lysozyme spans 68–183; sequence TGIVSQQCLQ…WSHVHAQGCS (116 aa). Intrachain disulfides connect Cys-75/Cys-151, Cys-80/Cys-86, Cys-91/Cys-100, Cys-113/Cys-133, Cys-123/Cys-129, and Cys-147/Cys-165. The active-site Proton donor is the Glu-83. Asp-94 acts as the Nucleophile in catalysis. A substrate-binding site is contributed by 106-112; the sequence is KEGYWHD. Substrate is bound by residues Tyr-137 and 158 to 160; that span reads HNG.

As to expression, highest levels of expression detected in the digestive glands. Lower levels in the mantle, labial palps, gills and style-midgut sac, and lowest levels detected in the hemocytes. Not detected in the gonads.

Its subcellular location is the secreted. The catalysed reaction is Hydrolysis of (1-&gt;4)-beta-linkages between N-acetylmuramic acid and N-acetyl-D-glucosamine residues in a peptidoglycan and between N-acetyl-D-glucosamine residues in chitodextrins.. Its function is as follows. Has antibacterial activity against the Gram-negative bacterium E.coli. No antibacterial activity detected against the Gram-negative bacterium V.vulnificus. The sequence is that of Lysozyme 3 from Crassostrea virginica (Eastern oyster).